Reading from the N-terminus, the 323-residue chain is Beta-ketoacyl-[acyl-carrier-protein] synthase III (323 aa).

Active-site residues include Cys-114 and His-250. The ACP-binding stretch occupies residues 251-255; sequence QANLR. Asn-280 is an active-site residue.

It belongs to the thiolase-like superfamily. FabH family. As to quaternary structure, homodimer.

Its subcellular location is the cytoplasm. The enzyme catalyses malonyl-[ACP] + acetyl-CoA + H(+) = 3-oxobutanoyl-[ACP] + CO2 + CoA. Its pathway is lipid metabolism; fatty acid biosynthesis. Functionally, catalyzes the condensation reaction of fatty acid synthesis by the addition to an acyl acceptor of two carbons from malonyl-ACP. Catalyzes the first condensation reaction which initiates fatty acid synthesis and may therefore play a role in governing the total rate of fatty acid production. Possesses both acetoacetyl-ACP synthase and acetyl transacylase activities. Its substrate specificity determines the biosynthesis of branched-chain and/or straight-chain of fatty acids. This Cereibacter sphaeroides (strain ATCC 17025 / ATH 2.4.3) (Rhodobacter sphaeroides) protein is Beta-ketoacyl-[acyl-carrier-protein] synthase III.